A 575-amino-acid polypeptide reads, in one-letter code: Muellerian-inhibiting factor (575 aa).

Positions 1-20 (MQGPSLSQLVLVLMGALLEA) are cleaved as a signal peptide. The propeptide occupies 21–466 (GTPREEVSST…ERSGPARAQR (446 aa)). N-linked (GlcNAc...) asparagine glycosylation is found at Asn-78 and Asn-343. 3 disulfide bridges follow: Cys-477-Cys-541, Cys-503-Cys-572, and Cys-507-Cys-574.

It belongs to the TGF-beta family. In terms of assembly, homodimer; disulfide-linked. In terms of processing, preproprotein is proteolytically processed to generate N- and C-terminal cleavage products that homodimerize and associate to form a biologically active non-covalent complex. Binding of the non-covalent complex to AMHR2 induces dissociation of the pro-region from the mature C-terminal dimer. The N-terminal portion of the protein, despite having no intrinsic activity, has the role of amplifying the activity of the C-terminus. In terms of tissue distribution, detected in fetal Sertoli cells. Expressed in granulosa cells of growing follicles but also in theca cells of preovulatory follicles and corpora lutea (at protein level).

The protein localises to the secreted. In terms of biological role, plays an important role in several reproductive functions. Induces Muellerian duct regression during male fetal sexual differentiation and plays a role in Leydig cell differentiation and function. In female acts as a negative regulator of the primordial to primary follicle transition and decreases FSH sensitivity of growing follicles. AMH signals by binding to a specific type-II receptor, AMHR2, that heterodimerizes with type-I receptors (ACVR1 and BMPR1A), and recruiting SMAD proteins that are translocated to the nucleus to regulate target gene expression. This is Muellerian-inhibiting factor (AMH) from Sus scrofa (Pig).